The primary structure comprises 282 residues: Snake venom serine protease BmSP (282 aa).

The signal sequence occupies residues 1–18 (MVLIGVLASLLILQLSYS). Residues 19-56 (KSLDDGAKESAYDDEIQQSSWGNSTVNTTLTETVVIQL) constitute a propeptide that is removed on maturation. 2 N-linked (GlcNAc...) asparagine glycosylation sites follow: Asn-41 and Asn-45. One can recognise a Peptidase S1 domain in the interval 57 to 280 (IMGGSECYKS…YIDWIKGIIA (224 aa)). 5 disulfides stabilise this stretch: Cys-63/Cys-195, Cys-82/Cys-98, Cys-174/Cys-241, Cys-206/Cys-220, and Cys-231/Cys-256. Residue His-97 is the Charge relay system of the active site. Asn-135 carries an N-linked (GlcNAc...) asparagine glycan. Asp-142 functions as the Charge relay system in the catalytic mechanism. N-linked (GlcNAc...) asparagine glycans are attached at residues Asn-149 and Asn-153. Residue Ser-235 is the Charge relay system of the active site.

This sequence belongs to the peptidase S1 family. Snake venom subfamily. In terms of assembly, monomer. Expressed by the venom gland.

It is found in the secreted. Functionally, snake venom serine protease that may act in the hemostasis system of the prey. This is Snake venom serine protease BmSP from Bungarus multicinctus (Many-banded krait).